The primary structure comprises 344 residues: Peroxidase 36 (344 aa).

The first 28 residues, 1-28 (MNTKTVKSMAGIVLSQISLVALFPLCIC), serve as a signal peptide directing secretion. Intrachain disulfides connect Cys50–Cys130, Cys83–Cys88, Cys136–Cys337, and Cys215–Cys247. His81 (proton acceptor) is an active-site residue. The Ca(2+) site is built by Asp82, Val85, Gly87, Asp89, and Ser91. Pro178 provides a ligand contact to substrate. His208 is a binding site for heme b. Thr209 contacts Ca(2+). The N-linked (GlcNAc...) asparagine glycan is linked to Asn224. 3 residues coordinate Ca(2+): Asp260, Thr263, and Asp268.

This sequence belongs to the peroxidase family. Classical plant (class III) peroxidase subfamily. The cofactor is heme b. It depends on Ca(2+) as a cofactor.

Its subcellular location is the secreted. The enzyme catalyses 2 a phenolic donor + H2O2 = 2 a phenolic radical donor + 2 H2O. Removal of H(2)O(2), oxidation of toxic reductants, biosynthesis and degradation of lignin, suberization, auxin catabolism, response to environmental stresses such as wounding, pathogen attack and oxidative stress. These functions might be dependent on each isozyme/isoform in each plant tissue. The polypeptide is Peroxidase 36 (PER36) (Arabidopsis thaliana (Mouse-ear cress)).